The sequence spans 641 residues: Chaperone protein DnaK (641 aa).

Position 199 is a phosphothreonine; by autocatalysis (threonine 199). Positions 577–590 are enriched in basic and acidic residues; sequence KGDNKDEIETRTQK. Residues 577–641 are disordered; sequence KGDNKDEIET…EFEEVDDKKK (65 aa). Positions 617–626 are enriched in low complexity; it reads GAEQASAQQD. Acidic residues predominate over residues 627–641; sequence DVVDAEFEEVDDKKK.

This sequence belongs to the heat shock protein 70 family.

Acts as a chaperone. The chain is Chaperone protein DnaK from Thioalkalivibrio sulfidiphilus (strain HL-EbGR7).